A 205-amino-acid polypeptide reads, in one-letter code: Outer-membrane lipoprotein carrier protein (205 aa).

Positions Met-1 to Ala-19 are cleaved as a signal peptide.

This sequence belongs to the LolA family. Monomer.

It localises to the periplasm. In terms of biological role, participates in the translocation of lipoproteins from the inner membrane to the outer membrane. Only forms a complex with a lipoprotein if the residue after the N-terminal Cys is not an aspartate (The Asp acts as a targeting signal to indicate that the lipoprotein should stay in the inner membrane). This is Outer-membrane lipoprotein carrier protein from Francisella tularensis subsp. holarctica (strain LVS).